A 169-amino-acid chain; its full sequence is uncharacterized protein (169 aa).

Positions 18-79 (LDRADVALLN…IVSPKAVGRP (62 aa)) constitute an HTH asnC-type domain. Positions 37 to 56 (SEELADKVGLSPTACQRRLK) form a DNA-binding region, H-T-H motif.

This is an uncharacterized protein from Sinorhizobium fredii (strain NBRC 101917 / NGR234).